Here is a 375-residue protein sequence, read N- to C-terminus: Probable 1-acyl-sn-glycerol-3-phosphate acyltransferase 5 (375 aa).

2 consecutive transmembrane segments (helical) span residues 21–41 and 57–77; these read IICL…WGFL and CVSF…EKIN. The short motif at 100–105 is the HXXXXD motif element; sequence HRTEVD. The next 2 helical transmembrane spans lie at 312–332 and 337–357; these read YLIN…LTFF and WFRI…HFNL.

This sequence belongs to the 1-acyl-sn-glycerol-3-phosphate acyltransferase family. As to expression, widely expressed at low level.

It is found in the membrane. It carries out the reaction a 1-acyl-sn-glycero-3-phosphate + an acyl-CoA = a 1,2-diacyl-sn-glycero-3-phosphate + CoA. Its pathway is phospholipid metabolism; CDP-diacylglycerol biosynthesis; CDP-diacylglycerol from sn-glycerol 3-phosphate: step 2/3. Functionally, may convert lysophosphatidic acid (LPA) into phosphatidic acid by incorporating acyl moiety at the 2 position. Has no activity when expressed in bacteria or yeast. This chain is Probable 1-acyl-sn-glycerol-3-phosphate acyltransferase 5 (LPAT5), found in Arabidopsis thaliana (Mouse-ear cress).